Here is a 230-residue protein sequence, read N- to C-terminus: MRLVIARCSVDYVGRLEAHLPSADRLLMVKADGSVSIHADDRAYKPLNWMTPPCSLVETPITDEDGEATGESLWVVENKKGEQLRITVEKIHSEQNFDLGEDPGLVKDGVEDHLQELLAEHITTLGDGYTLIRREYPTAIGPVDILCRNSDGETVAVEIKRRGGIDGVEQLTRYLELLNRDELLKPVHGVFAAQEIKPQAKTLAEDRGIKCVTLDYQALRGIESNELTLF.

It belongs to the NucS endonuclease family.

The protein localises to the cytoplasm. Its function is as follows. Cleaves both 3' and 5' ssDNA extremities of branched DNA structures. The chain is Endonuclease NucS from Corynebacterium glutamicum (strain R).